We begin with the raw amino-acid sequence, 133 residues long: Aspartate 1-decarboxylase (133 aa).

Ser-26 functions as the Schiff-base intermediate with substrate; via pyruvic acid in the catalytic mechanism. Ser-26 bears the Pyruvic acid (Ser) mark. Residue Thr-58 coordinates substrate. The active-site Proton donor is the Tyr-59. Residue 74–76 (GAA) participates in substrate binding.

It belongs to the PanD family. As to quaternary structure, heterooctamer of four alpha and four beta subunits. It depends on pyruvate as a cofactor. In terms of processing, is synthesized initially as an inactive proenzyme, which is activated by self-cleavage at a specific serine bond to produce a beta-subunit with a hydroxyl group at its C-terminus and an alpha-subunit with a pyruvoyl group at its N-terminus.

It localises to the cytoplasm. The catalysed reaction is L-aspartate + H(+) = beta-alanine + CO2. Its pathway is cofactor biosynthesis; (R)-pantothenate biosynthesis; beta-alanine from L-aspartate: step 1/1. In terms of biological role, catalyzes the pyruvoyl-dependent decarboxylation of aspartate to produce beta-alanine. This is Aspartate 1-decarboxylase from Legionella pneumophila subsp. pneumophila (strain Philadelphia 1 / ATCC 33152 / DSM 7513).